Here is a 347-residue protein sequence, read N- to C-terminus: Heat-inducible transcription repressor HrcA (347 aa).

The protein belongs to the HrcA family.

Negative regulator of class I heat shock genes (grpE-dnaK-dnaJ and groELS operons). Prevents heat-shock induction of these operons. This chain is Heat-inducible transcription repressor HrcA, found in Lactobacillus delbrueckii subsp. bulgaricus (strain ATCC BAA-365 / Lb-18).